The sequence spans 136 residues: uncharacterized protein (136 aa).

Positions 46 to 136 are disordered; sequence SAGRHLGGPG…LDGLEDAEKR (91 aa). Residues 99-108 are compositionally biased toward gly residues; that stretch reads GPGDAGGAGG. Residues 123–136 are compositionally biased toward acidic residues; that stretch reads IAELLDGLEDAEKR.

This is an uncharacterized protein from Homo sapiens (Human).